The chain runs to 150 residues: uncharacterized protein (150 aa).

It belongs to the IIV-6 391R family.

This is an uncharacterized protein from Invertebrate iridescent virus 3 (IIV-3).